The primary structure comprises 284 residues: 2-dehydro-3-deoxyphosphooctonate aldolase (284 aa).

This sequence belongs to the KdsA family.

The protein resides in the cytoplasm. The catalysed reaction is D-arabinose 5-phosphate + phosphoenolpyruvate + H2O = 3-deoxy-alpha-D-manno-2-octulosonate-8-phosphate + phosphate. Its pathway is carbohydrate biosynthesis; 3-deoxy-D-manno-octulosonate biosynthesis; 3-deoxy-D-manno-octulosonate from D-ribulose 5-phosphate: step 2/3. The protein operates within bacterial outer membrane biogenesis; lipopolysaccharide biosynthesis. In Haemophilus influenzae (strain PittEE), this protein is 2-dehydro-3-deoxyphosphooctonate aldolase.